The chain runs to 880 residues: Chaperone protein ClpB 1 (880 aa).

A Clp R domain is found at 6 to 148 (PNKFTDKAWE…EASIKAVRGS (143 aa)). 2 repeat regions span residues 9–74 (FTDK…TQRQ) and 85–148 (LGRS…VRGS). The segment at 161-343 (EALQKFGRDL…RRFQQVYVDQ (183 aa)) is NBD1. Residue 208–215 (GEPGVGKT) coordinates ATP. Residues 344-554 (PSVENTISIL…IAEIVAKWTG (211 aa)) form a linker region. A coiled-coil region spans residues 394–530 (IDLVDEAAAQ…KEAKLLELQS (137 aa)). Positions 564–775 (ERQKLLQLES…RVDDTILFHA (212 aa)) are NBD2. 614-621 (GPTGVGKT) provides a ligand contact to ATP. Residues 776 to 880 (LSRSEMSHII…VKVSVTQITT (105 aa)) are C-terminal.

This sequence belongs to the ClpA/ClpB family. In terms of assembly, homohexamer. The oligomerization is ATP-dependent.

It localises to the cytoplasm. Functionally, part of a stress-induced multi-chaperone system, it is involved in the recovery of the cell from heat-induced damage, in cooperation with DnaK, DnaJ and GrpE. Acts before DnaK, in the processing of protein aggregates. Protein binding stimulates the ATPase activity; ATP hydrolysis unfolds the denatured protein aggregates, which probably helps expose new hydrophobic binding sites on the surface of ClpB-bound aggregates, contributing to the solubilization and refolding of denatured protein aggregates by DnaK. The chain is Chaperone protein ClpB 1 (clpB1) from Nostoc sp. (strain PCC 7120 / SAG 25.82 / UTEX 2576).